We begin with the raw amino-acid sequence, 348 residues long: Rhodopsin (348 aa).

At methionine 1 the chain carries N-acetylmethionine. At 1-36 (MNGTEGPNFYVPFSNATGVVRSPFEYPQYYLAEPWQ) the chain is on the extracellular side. N-linked (GlcNAc...) asparagine glycosylation is found at asparagine 2 and asparagine 15. The helical transmembrane segment at 37 to 61 (FSMLAAYMFLLIVLGFPINFLTLYV) threads the bilayer. The Cytoplasmic portion of the chain corresponds to 62–73 (TVQHKKLRTPLN). Residues 74-96 (YILLNLAVADLFMVFGGFTTTLY) form a helical membrane-spanning segment. Over 97–110 (TSLHGYFVFGPTGC) the chain is Extracellular. Cysteine 110 and cysteine 187 are disulfide-bonded. A helical transmembrane segment spans residues 111–133 (NLEGFFATLGGEIALWSLVVLAI). The 'Ionic lock' involved in activated form stabilization signature appears at 134-136 (ERY). The Cytoplasmic portion of the chain corresponds to 134–152 (ERYVVICKPMSNFRFGENH). A helical membrane pass occupies residues 153-173 (AIMGVVFTWIMALACAAPPLV). At 174–202 (GWSRYIPEGMQCSCGVDYYTLKPEVNNES) the chain is on the extracellular side. Residue glutamate 201 coordinates Zn(2+). The helical transmembrane segment at 203–224 (FVIYMFVVHFTIPLIVIFFCYG) threads the bilayer. Residues 225–252 (QLVFTVKEAAAQQQESATTQKAEKEVTR) lie on the Cytoplasmic side of the membrane. A helical transmembrane segment spans residues 253–274 (MVILMVVFFLICWFPYAGVAFY). At 275 to 286 (IFTHQGSNFGPI) the chain is on the extracellular side. Residue glutamine 279 coordinates Zn(2+). The chain crosses the membrane as a helical span at residues 287 to 308 (FMTLPAFFAKSSSIYNPVIYIM). Position 296 is an N6-(retinylidene)lysine (lysine 296). At 309-348 (MNKQFRNCMLTTLCCGKNILGDDEASATASKTETSQVAPA) the chain is on the cytoplasmic side. 2 S-palmitoyl cysteine lipidation sites follow: cysteine 322 and cysteine 323. Positions 330 to 348 (DDEASATASKTETSQVAPA) are interaction with SAG. Serine 334 carries the phosphoserine modification. Threonine 336 carries the post-translational modification Phosphothreonine. Residue serine 338 is modified to Phosphoserine. Phosphothreonine occurs at positions 340 and 342. Phosphoserine is present on serine 343.

The protein belongs to the G-protein coupled receptor 1 family. Opsin subfamily. As to quaternary structure, homodimer. May form a complex composed of RHO, GRK1 and RCVRN in a Ca(2+)-dependent manner; RCVRN prevents the interaction between GRK1 and RHO. Interacts with GRK1. Interacts (phosphorylated form) with SAG. Interacts with GNAT1. Interacts with GNAT3. SAG and G-proteins compete for a common binding site. Interacts with PRCD; the interaction promotes PRCD stability. Forms a complex with ASAP1 and ARF4. Forms a complex with ASAP1, RAB11A, Rabin8/RAB3IP, ARF4 and RAB11FIP3; the complex regulates Golgi-to-cilia rhodopsin/RHO transport in photoreceptors. Phosphorylated on some or all of the serine and threonine residues present in the C-terminal region. In terms of processing, contains one covalently linked retinal chromophore. Upon light absorption, the covalently bound 11-cis-retinal is converted to all-trans-retinal. After hydrolysis of the Schiff base and release of the covalently bound all-trans-retinal, active rhodopsin is regenerated by binding of a fresh molecule of 11-cis-retinal.

The protein resides in the membrane. It localises to the cell projection. The protein localises to the cilium. It is found in the photoreceptor outer segment. In terms of biological role, photoreceptor required for image-forming vision at low light intensity. Required for photoreceptor cell viability after birth. Light-induced isomerization of 11-cis to all-trans retinal triggers a conformational change that activates signaling via G-proteins. Subsequent receptor phosphorylation mediates displacement of the bound G-protein alpha subunit by the arrestin SAG and terminates signaling. The protein is Rhodopsin (RHO) of Cricetulus griseus (Chinese hamster).